The sequence spans 804 residues: DNA mismatch repair protein MutS (804 aa).

An ATP-binding site is contributed by 614–621 (GPNMAGKS).

This sequence belongs to the DNA mismatch repair MutS family.

In terms of biological role, this protein is involved in the repair of mismatches in DNA. It is possible that it carries out the mismatch recognition step. This protein has a weak ATPase activity. The polypeptide is DNA mismatch repair protein MutS (Ehrlichia ruminantium (strain Welgevonden)).